Here is a 349-residue protein sequence, read N- to C-terminus: S-adenosylmethionine:tRNA ribosyltransferase-isomerase (349 aa).

The protein belongs to the QueA family. Monomer.

It is found in the cytoplasm. The enzyme catalyses 7-aminomethyl-7-carbaguanosine(34) in tRNA + S-adenosyl-L-methionine = epoxyqueuosine(34) in tRNA + adenine + L-methionine + 2 H(+). Its pathway is tRNA modification; tRNA-queuosine biosynthesis. Transfers and isomerizes the ribose moiety from AdoMet to the 7-aminomethyl group of 7-deazaguanine (preQ1-tRNA) to give epoxyqueuosine (oQ-tRNA). The sequence is that of S-adenosylmethionine:tRNA ribosyltransferase-isomerase from Ruegeria sp. (strain TM1040) (Silicibacter sp.).